Reading from the N-terminus, the 791-residue chain is KN motif and ankyrin repeat domain-containing protein 3 (791 aa).

5 disordered regions span residues 1–37 (MAKF…SVET), 56–181 (RGPA…GPAQ), 254–312 (ATSD…ETRE), 401–425 (GCTE…GDEM), and 463–514 (YESS…GDCE). Residues 25 to 34 (SARSPSSPYS) show a composition bias toward polar residues. Residues 105 to 125 (LSPGAFPGLSLPPLSPRSLSR) show a composition bias toward low complexity. A compositionally biased stretch (basic and acidic residues) spans 127–149 (PRVEHTLLETSRRLEQAQARERA). Serine 151, serine 159, serine 163, serine 166, serine 167, and serine 176 each carry phosphoserine. Over residues 158–180 (RSPRGSGRSSPAPNPALASPGPA) the composition is skewed to low complexity. A coiled-coil region spans residues 180–229 (AQLQLVREQMAAALRRLRELEDQARALPELQEQVRALRAEKARLLAGRVQ). Composition is skewed to basic and acidic residues over residues 254–280 (ATSD…RRSE) and 293–312 (PDGE…ETRE). Serine 279 is modified (phosphoserine). The span at 401–410 (GCTEKTTQTE) shows a compositional bias: polar residues. Residues 485-496 (SSSSGSDDSSGG) show a composition bias toward low complexity. Basic and acidic residues predominate over residues 505–514 (HNDKDAGDCE). ANK repeat units lie at residues 606-636 (NGNT…DVNH), 640-677 (AGYS…AKAS), 679-708 (TGQT…DVNV), 712-742 (DGAT…DLTI), and 746-775 (EGTS…SNHQ). Polar residues predominate over residues 772–783 (SNHQGQSSTGSP). Residues 772–791 (SNHQGQSSTGSPTAKECNDK) form a disordered region.

In terms of biological role, may be involved in the control of cytoskeleton formation by regulating actin polymerization. In Mus musculus (Mouse), this protein is KN motif and ankyrin repeat domain-containing protein 3.